The following is a 245-amino-acid chain: Orotidine 5'-phosphate decarboxylase (245 aa).

Substrate-binding positions include Asp22, Lys44, 71-80 (DLKFHDIPNT), Thr131, Arg192, Gln201, Gly221, and Arg222. The active-site Proton donor is Lys73.

It belongs to the OMP decarboxylase family. Type 1 subfamily. In terms of assembly, homodimer.

It carries out the reaction orotidine 5'-phosphate + H(+) = UMP + CO2. The protein operates within pyrimidine metabolism; UMP biosynthesis via de novo pathway; UMP from orotate: step 2/2. Catalyzes the decarboxylation of orotidine 5'-monophosphate (OMP) to uridine 5'-monophosphate (UMP). The sequence is that of Orotidine 5'-phosphate decarboxylase from Escherichia coli (strain K12 / MC4100 / BW2952).